Here is a 75-residue protein sequence, read N- to C-terminus: Small ribosomal subunit protein bS18 (75 aa).

Belongs to the bacterial ribosomal protein bS18 family. Part of the 30S ribosomal subunit. Forms a tight heterodimer with protein bS6.

Binds as a heterodimer with protein bS6 to the central domain of the 16S rRNA, where it helps stabilize the platform of the 30S subunit. The chain is Small ribosomal subunit protein bS18 from Thermotoga sp. (strain RQ2).